The following is a 200-amino-acid chain: Cytochrome c biogenesis ATP-binding export protein CcmA (200 aa).

The 197-residue stretch at 3-199 (LSGRRVICVR…DSRELRIGGV (197 aa)) folds into the ABC transporter domain. Position 35–42 (35–42 (GRNGSGKT)) interacts with ATP.

The protein belongs to the ABC transporter superfamily. CcmA exporter (TC 3.A.1.107) family. As to quaternary structure, the complex is composed of two ATP-binding proteins (CcmA) and two transmembrane proteins (CcmB).

Its subcellular location is the cell inner membrane. It catalyses the reaction heme b(in) + ATP + H2O = heme b(out) + ADP + phosphate + H(+). Functionally, part of the ABC transporter complex CcmAB involved in the biogenesis of c-type cytochromes; once thought to export heme, this seems not to be the case, but its exact role is uncertain. Responsible for energy coupling to the transport system. The chain is Cytochrome c biogenesis ATP-binding export protein CcmA from Bradyrhizobium diazoefficiens (strain JCM 10833 / BCRC 13528 / IAM 13628 / NBRC 14792 / USDA 110).